Here is a 674-residue protein sequence, read N- to C-terminus: tRNA 5-methylaminomethyl-2-thiouridine biosynthesis bifunctional protein MnmC (674 aa).

Residues 1–237 are tRNA (mnm(5)s(2)U34)-methyltransferase; the sequence is MLTSYQLESP…KREMTVGELN (237 aa). Positions 270–674 are FAD-dependent cmnm(5)s(2)U34 oxidoreductase; the sequence is VGAGLAGANT…IRDLKRSQIL (405 aa).

It in the N-terminal section; belongs to the methyltransferase superfamily. tRNA (mnm(5)s(2)U34)-methyltransferase family. This sequence in the C-terminal section; belongs to the DAO family. It depends on FAD as a cofactor.

Its subcellular location is the cytoplasm. The enzyme catalyses 5-aminomethyl-2-thiouridine(34) in tRNA + S-adenosyl-L-methionine = 5-methylaminomethyl-2-thiouridine(34) in tRNA + S-adenosyl-L-homocysteine + H(+). Functionally, catalyzes the last two steps in the biosynthesis of 5-methylaminomethyl-2-thiouridine (mnm(5)s(2)U) at the wobble position (U34) in tRNA. Catalyzes the FAD-dependent demodification of cmnm(5)s(2)U34 to nm(5)s(2)U34, followed by the transfer of a methyl group from S-adenosyl-L-methionine to nm(5)s(2)U34, to form mnm(5)s(2)U34. This is tRNA 5-methylaminomethyl-2-thiouridine biosynthesis bifunctional protein MnmC from Marinomonas sp. (strain MWYL1).